A 683-amino-acid chain; its full sequence is uncharacterized protein (683 aa).

Coiled coils occupy residues 62–124 (PEHY…RKER), 155–259 (TTTN…KLSQ), and 346–376 (KKSL…DGDV). Residues 213–237 (QDQVESQTGPKKRRKSPIENQPTAG) are disordered.

This is an uncharacterized protein from Invertebrate iridescent virus 3 (IIV-3).